The following is a 238-amino-acid chain: 2-phytyl-1,4-naphtoquinone methyltransferase (238 aa).

The protein belongs to the class I-like SAM-binding methyltransferase superfamily. MenG/UbiE family.

The catalysed reaction is demethylphylloquinol + S-adenosyl-L-methionine = phylloquinol + S-adenosyl-L-homocysteine + H(+). It functions in the pathway cofactor biosynthesis; phylloquinone biosynthesis. Its function is as follows. Methyltransferase required for the conversion of 2-phytyl-1,4-beta-naphthoquinol to phylloquinol. In Synechocystis sp. (strain ATCC 27184 / PCC 6803 / Kazusa), this protein is 2-phytyl-1,4-naphtoquinone methyltransferase.